Here is a 198-residue protein sequence, read N- to C-terminus: Protein UNCMA_24250 (198 aa).

Positions 5-194 constitute an AMMECR1 domain; it reads EDGTLAVKTA…ETEPGGPVIE (190 aa).

The polypeptide is Protein UNCMA_24250 (Methanocella arvoryzae (strain DSM 22066 / NBRC 105507 / MRE50)).